A 95-amino-acid chain; its full sequence is Aspartyl/glutamyl-tRNA(Asn/Gln) amidotransferase subunit C (95 aa).

This sequence belongs to the GatC family. As to quaternary structure, heterotrimer of A, B and C subunits.

It catalyses the reaction L-glutamyl-tRNA(Gln) + L-glutamine + ATP + H2O = L-glutaminyl-tRNA(Gln) + L-glutamate + ADP + phosphate + H(+). It carries out the reaction L-aspartyl-tRNA(Asn) + L-glutamine + ATP + H2O = L-asparaginyl-tRNA(Asn) + L-glutamate + ADP + phosphate + 2 H(+). Its function is as follows. Allows the formation of correctly charged Asn-tRNA(Asn) or Gln-tRNA(Gln) through the transamidation of misacylated Asp-tRNA(Asn) or Glu-tRNA(Gln) in organisms which lack either or both of asparaginyl-tRNA or glutaminyl-tRNA synthetases. The reaction takes place in the presence of glutamine and ATP through an activated phospho-Asp-tRNA(Asn) or phospho-Glu-tRNA(Gln). The chain is Aspartyl/glutamyl-tRNA(Asn/Gln) amidotransferase subunit C from Laribacter hongkongensis (strain HLHK9).